Reading from the N-terminus, the 599-residue chain is NADH-quinone oxidoreductase subunit C/D (599 aa).

An NADH dehydrogenase I subunit C region spans residues 1–189 (MTDLTTHDLA…DPFVLTKQKE (189 aa)). The interval 213-599 (DFMFLNLGPN…IDFVMSDVDR (387 aa)) is NADH dehydrogenase I subunit D.

This sequence in the N-terminal section; belongs to the complex I 30 kDa subunit family. The protein in the C-terminal section; belongs to the complex I 49 kDa subunit family. NDH-1 is composed of 13 different subunits. Subunits NuoB, CD, E, F, and G constitute the peripheral sector of the complex.

The protein resides in the cell inner membrane. The enzyme catalyses a quinone + NADH + 5 H(+)(in) = a quinol + NAD(+) + 4 H(+)(out). In terms of biological role, NDH-1 shuttles electrons from NADH, via FMN and iron-sulfur (Fe-S) centers, to quinones in the respiratory chain. The immediate electron acceptor for the enzyme in this species is believed to be ubiquinone. Couples the redox reaction to proton translocation (for every two electrons transferred, four hydrogen ions are translocated across the cytoplasmic membrane), and thus conserves the redox energy in a proton gradient. This is NADH-quinone oxidoreductase subunit C/D from Pectobacterium carotovorum subsp. carotovorum (strain PC1).